Reading from the N-terminus, the 468-residue chain is Na(+)/H(+) antiporter (468 aa).

Helical transmembrane passes span 12–32, 36–56, 81–96, 103–123, 133–153, 169–189, 204–224, and 258–278; these read HLAL…SEVF, LLVG…PHAA, DVRV…GAYF, IIVM…GFAY, GSLL…ALIV, LLIA…YFAI, WVLL…CVIG, and GIGT…GILF. Asparagine 287 carries an N-linked (GlcNAc...) asparagine glycan. The helical transmembrane segment at 293 to 313 threads the bilayer; sequence VPAFIDQTFSLLFFTYYGTII. Asparagine 319 is a glycosylation site (N-linked (GlcNAc...) asparagine). The next 3 helical transmembrane spans lie at 320 to 340, 362 to 382, and 408 to 428; these read WSVE…TLVC, ALFV…AFLA, and IIWP…GFSI. Serine 449 and serine 451 each carry phosphoserine.

It belongs to the fungal Na(+)/H(+) exchanger family.

It is found in the cell membrane. Functionally, sodium export from cell, takes up external protons in exchange for internal sodium ions. Involved in regulation of pH. The sequence is that of Na(+)/H(+) antiporter from Schizosaccharomyces pombe (strain 972 / ATCC 24843) (Fission yeast).